Reading from the N-terminus, the 590-residue chain is Protein NRT1/ PTR FAMILY 6.3 (590 aa).

The next 2 helical transmembrane spans lie at Leu46–Gly66 and Phe77–Gly97. Position 101 is a phosphothreonine; by CIPK23 (Thr101). The next 10 membrane-spanning stretches (helical) occupy residues Ile102 to Ile122, Gly143 to Val163, Phe193 to Asp213, Trp219 to Thr239, Met342 to Leu362, Ile374 to Leu394, Ile423 to Lys443, Leu460 to Tyr480, Gly501 to Val521, and Tyr542 to Phe562. The substrate site is built by His356 and Thr360.

It belongs to the major facilitator superfamily. Proton-dependent oligopeptide transporter (POT/PTR) (TC 2.A.17) family. As to quaternary structure, monomer and homodimer. The dimer has the 2 monomers in the same orientation. Interacts with CIPK23. Post-translationally, acts as a high-affinity nitrate transporter when phosphorylated and as a low-affinity transporter when dephosphorylated. Forms homodimer when unphosphorylated and monomer when phosphorylated. Low nitrogen concentration in the medium stimulates phosphorylation. Phosphorylation also regulates the nitrate signaling. In terms of tissue distribution, expressed in the stele in lateral root primordia before emergence and in the tip of primary and emerged lateral roots. Detected in emerging and immature leaves, guard cells, flower buds, style, stigma, anthers and pollen grains. Not detected in the shoot apical meristem.

The protein localises to the membrane. Dual affinity nitrate transporter. Involved in proton-dependent nitrate uptake and in the regulation of the nitrate transporter NRT2.1. Also acts as a nitrate sensor that trigger a specific signaling pathway stimulating lateral root growth and seed germination. The uptake activity is not required for sensor function. Displays an auxin transport facilitation inhibited by high nitrate concentration. Required to prevent auxin accumulation in preemerged lateral root primordia and young lateral roots when external nitrate concentration is low or null. May be involved in the basipetal transport of auxin out of the lateral root tips. Acts as a bidirectional transporter involved in root-to-shoot nitrate translocation. Recognizes specifically nitrate and chlorate, but not nitrite, alanine, sulfate, phosphate or the di-peptide Ala-Ala. The sequence is that of Protein NRT1/ PTR FAMILY 6.3 (NPF6.3) from Arabidopsis thaliana (Mouse-ear cress).